We begin with the raw amino-acid sequence, 852 residues long: Bifunctional uridylyltransferase/uridylyl-removing enzyme (852 aa).

The interval 1–318 (MPANLSSALE…STPLRVTLRI (318 aa)) is uridylyltransferase. The interval 319–672 (DDDYIQVNNQ…SRILPKSDSF (354 aa)) is uridylyl-removing. Residues 436 to 558 (VDDHILTVVR…VQTHERLSAL (123 aa)) enclose the HD domain. 2 consecutive ACT domains span residues 673 to 757 (QVMV…SRSR) and 785 to 852 (SVEI…EQLS).

This sequence belongs to the GlnD family. The cofactor is Mg(2+).

The enzyme catalyses [protein-PII]-L-tyrosine + UTP = [protein-PII]-uridylyl-L-tyrosine + diphosphate. It carries out the reaction [protein-PII]-uridylyl-L-tyrosine + H2O = [protein-PII]-L-tyrosine + UMP + H(+). Uridylyltransferase (UTase) activity is inhibited by glutamine, while glutamine activates uridylyl-removing (UR) activity. Modifies, by uridylylation and deuridylylation, the PII regulatory proteins (GlnB and homologs), in response to the nitrogen status of the cell that GlnD senses through the glutamine level. Under low glutamine levels, catalyzes the conversion of the PII proteins and UTP to PII-UMP and PPi, while under higher glutamine levels, GlnD hydrolyzes PII-UMP to PII and UMP (deuridylylation). Thus, controls uridylylation state and activity of the PII proteins, and plays an important role in the regulation of nitrogen assimilation and metabolism. This Neisseria meningitidis serogroup B (strain ATCC BAA-335 / MC58) protein is Bifunctional uridylyltransferase/uridylyl-removing enzyme.